The chain runs to 989 residues: Translation initiation factor IF-2 (989 aa).

Disordered stretches follow at residues 43 to 219 (KRRR…LQAR) and 234 to 379 (EARR…GGAR). Residues 72-87 (NTPNKDTAVTQTATKN) show a composition bias toward polar residues. The span at 105 to 146 (PKPVAAEATAQETSKAAPAAAQPVAEKEAAAPASAEAAKSAA) shows a compositional bias: low complexity. Residues 149–159 (VTDRGAKKTTE) show a composition bias toward basic and acidic residues. Positions 160 to 171 (KNGANASGNRPS) are enriched in polar residues. Residues 234–293 (EARRREDRLKQEADLEEQRRIEEKRRLEAEAKVEAEKQAALKEKEKAEAKARAKAEKEAK) are compositionally biased toward basic and acidic residues. Positions 294–303 (AAQAKTAGAA) are enriched in low complexity. Basic and acidic residues predominate over residues 342–361 (PRREAPRPAMRDRKGEDRRQ). Residues 489-659 (SRPPVVTIMG…LLQAEMLELK (171 aa)) form the tr-type G domain. The G1 stretch occupies residues 498–505 (GHVDHGKT). Position 498–505 (498–505 (GHVDHGKT)) interacts with GTP. The tract at residues 523-527 (GITQH) is G2. The interval 545 to 548 (DTPG) is G3. Residues 545–549 (DTPGH) and 599–602 (NKMD) contribute to the GTP site. The G4 stretch occupies residues 599-602 (NKMD). Residues 635 to 637 (SAA) form a G5 region.

This sequence belongs to the TRAFAC class translation factor GTPase superfamily. Classic translation factor GTPase family. IF-2 subfamily.

Its subcellular location is the cytoplasm. In terms of biological role, one of the essential components for the initiation of protein synthesis. Protects formylmethionyl-tRNA from spontaneous hydrolysis and promotes its binding to the 30S ribosomal subunits. Also involved in the hydrolysis of GTP during the formation of the 70S ribosomal complex. The sequence is that of Translation initiation factor IF-2 from Zymomonas mobilis subsp. mobilis (strain ATCC 31821 / ZM4 / CP4).